Consider the following 286-residue polypeptide: 4-diphosphocytidyl-2-C-methyl-D-erythritol kinase (286 aa).

The active site involves Lys-8. 92 to 102 (PVSAGLAGGST) serves as a coordination point for ATP. Asp-134 is an active-site residue.

This sequence belongs to the GHMP kinase family. IspE subfamily.

The catalysed reaction is 4-CDP-2-C-methyl-D-erythritol + ATP = 4-CDP-2-C-methyl-D-erythritol 2-phosphate + ADP + H(+). It participates in isoprenoid biosynthesis; isopentenyl diphosphate biosynthesis via DXP pathway; isopentenyl diphosphate from 1-deoxy-D-xylulose 5-phosphate: step 3/6. Catalyzes the phosphorylation of the position 2 hydroxy group of 4-diphosphocytidyl-2C-methyl-D-erythritol. In Caldicellulosiruptor bescii (strain ATCC BAA-1888 / DSM 6725 / KCTC 15123 / Z-1320) (Anaerocellum thermophilum), this protein is 4-diphosphocytidyl-2-C-methyl-D-erythritol kinase.